Consider the following 353-residue polypeptide: MLNDILTGYGIFILEILTILLLILAVVGLIISYRQHNKSKVGELEIKDLSEEFNEQVRLLRDFNLSEEEQKQRTKAEKKAEKQNAKKRKEKLKKGETLEDEKKACVYVLDFCGDISASETTALREEISAILNVAKSEDEVLLRLESPGGIVHNYGFAASQLSRLKQKGIKLTVAVDKVAASGGYMMACVADKIVSAPFAVIGSIGVVAQIPNVHRLLKKHDVDVDVMTAGEFKRTVTVLGENTEKGKQKFQQELEETHKLFKQFVSQNRPCLDIDKIATGEHWFGQQAIALQLVDEISTSDDLILEKMKEKQVLNVKYRLKKSLIKKFGRQAEESAINIIHRYSTKQSRDFMY.

A helical transmembrane segment spans residues 11–31 (IFILEILTILLLILAVVGLII). The span at 70 to 84 (QKQRTKAEKKAEKQN) shows a compositional bias: basic and acidic residues. Positions 70 to 93 (QKQRTKAEKKAEKQNAKKRKEKLK) are disordered. Catalysis depends on S181, which acts as the Nucleophile. The active-site Proton donor/acceptor is K233.

The protein belongs to the peptidase S49 family.

The protein localises to the cell membrane. Possible protease. This Haemophilus influenzae (strain ATCC 51907 / DSM 11121 / KW20 / Rd) protein is Probable protease SohB (sohB).